Here is a 533-residue protein sequence, read N- to C-terminus: Acyl-CoA-binding domain-containing protein 5 (533 aa).

Residues 42-131 (HETRFEAAVK…MKKILETMPM (90 aa)) form the ACB domain. An acyl-CoA-binding positions include 53-62 (IQSLPKNGSF), 73-77 (YSFYK), lysine 99, and tyrosine 118. A disordered region spans residues 182–227 (TPNAKTVNGKAESSDSGAESEEEAAQEDPKRPEPRDSDKKMMKKSA). Residues serine 194, serine 195, serine 197, and serine 201 each carry the phosphoserine modification. Residues 208 to 227 (EDPKRPEPRDSDKKMMKKSA) are compositionally biased toward basic and acidic residues. Residues serine 244 and serine 314 each carry the phosphoserine modification. The segment at 339 to 443 (GGNPSQPLES…ERWGSDRGSR (105 aa)) is disordered. The span at 374–383 (GKGEVKRGGE) shows a compositional bias: basic and acidic residues. Serine 429 is modified (phosphoserine). Residues 432–442 (DGERWGSDRGS) show a composition bias toward basic and acidic residues. The stretch at 448–478 (EQIALVLMRLQEDMQNVLQRLHKLEMLAASQ) forms a coiled coil. Residue lysine 470 is modified to N6-acetyllysine. Residues 503–525 (SPGALTFAIIWPFIAQWLVHLYY) form a helical membrane-spanning segment.

This sequence belongs to the ATG37 family. In terms of tissue distribution, highly expressed in brain and liver. Lower levels of expression in spleen and heart.

It is found in the peroxisome membrane. Its function is as follows. Acyl-CoA binding protein which acts as the peroxisome receptor for pexophagy but is dispensable for aggrephagy and nonselective autophagy. Binds medium- and long-chain acyl-CoA esters. This Bos taurus (Bovine) protein is Acyl-CoA-binding domain-containing protein 5 (ACBD5).